Reading from the N-terminus, the 97-residue chain is Putative pterin-4-alpha-carbinolamine dehydratase (97 aa).

The protein belongs to the pterin-4-alpha-carbinolamine dehydratase family.

The enzyme catalyses (4aS,6R)-4a-hydroxy-L-erythro-5,6,7,8-tetrahydrobiopterin = (6R)-L-erythro-6,7-dihydrobiopterin + H2O. This Brucella abortus (strain S19) protein is Putative pterin-4-alpha-carbinolamine dehydratase.